A 269-amino-acid chain; its full sequence is MPGVETIKSSWADEVELDYGGLPPTTETVENGHKYVTEYKYNKDDKKTKVVRTYKISKQVVPKTVAKRRTWTKFGESKNDKPGPNSQTTMVSEEIIMQFLNSKEDEKANDPLLDPTKNIAKCRICNGEHWSVNCPYKGTAMDTNLMEKKASAAAAAAVDAPKSGKYVPPFLKDSQKGALGMRGRDDTAAIRISNLSESMTEADLEELVKKIGPQSKMYLARDKNTGLCKGFAYVHFKQRKDAAAAIEILNGHGYDHLILSVEWSKPQNN.

One can recognise an RRM domain in the interval 188 to 266; sequence AAIRISNLSE…LILSVEWSKP (79 aa).

The protein belongs to the eIF-3 subunit G family. As to quaternary structure, component of the eukaryotic translation initiation factor 3 (eIF-3) complex. The eIF-3 complex interacts with pix.

Its subcellular location is the cytoplasm. Functionally, RNA-binding component of the eukaryotic translation initiation factor 3 (eIF-3) complex, which is involved in protein synthesis of a specialized repertoire of mRNAs and, together with other initiation factors, stimulates binding of mRNA and methionyl-tRNAi to the 40S ribosome. The eIF-3 complex specifically targets and initiates translation of a subset of mRNAs involved in cell proliferation. This subunit can bind 18S rRNA. This is Eukaryotic translation initiation factor 3 subunit G-1 from Drosophila erecta (Fruit fly).